Consider the following 89-residue polypeptide: Large ribosomal subunit protein bL27 (89 aa).

The tract at residues 1–21 (MAHKKAGGSSRNGRDSAGRRL) is disordered.

This sequence belongs to the bacterial ribosomal protein bL27 family.

The sequence is that of Large ribosomal subunit protein bL27 from Roseobacter denitrificans (strain ATCC 33942 / OCh 114) (Erythrobacter sp. (strain OCh 114)).